Reading from the N-terminus, the 105-residue chain is Met repressor (105 aa).

This sequence belongs to the MetJ family. As to quaternary structure, homodimer.

It is found in the cytoplasm. Functionally, this regulatory protein, when combined with SAM (S-adenosylmethionine) represses the expression of the methionine regulon and of enzymes involved in SAM synthesis. In Sodalis glossinidius (strain morsitans), this protein is Met repressor.